The sequence spans 197 residues: Probable GTP-binding protein EngB (197 aa).

An EngB-type G domain is found at 26–197 (ELPEIALAGR…EAWDAILEKL (172 aa)). Residues 34 to 41 (GRSNVGKS), 61 to 65 (GKTQL), 79 to 82 (DVPG), 146 to 149 (TKAD), and 178 to 180 (FSS) contribute to the GTP site. 2 residues coordinate Mg(2+): Ser41 and Thr63.

The protein belongs to the TRAFAC class TrmE-Era-EngA-EngB-Septin-like GTPase superfamily. EngB GTPase family. Requires Mg(2+) as cofactor.

Its function is as follows. Necessary for normal cell division and for the maintenance of normal septation. This chain is Probable GTP-binding protein EngB, found in Streptococcus pneumoniae (strain CGSP14).